The sequence spans 259 residues: Thiazole synthase (259 aa).

Lys-95 functions as the Schiff-base intermediate with DXP in the catalytic mechanism. 1-deoxy-D-xylulose 5-phosphate is bound by residues Gly-156, 183-184, and 205-206; these read AG and NS.

This sequence belongs to the ThiG family. Homotetramer. Forms heterodimers with either ThiH or ThiS.

The protein localises to the cytoplasm. It carries out the reaction [ThiS sulfur-carrier protein]-C-terminal-Gly-aminoethanethioate + 2-iminoacetate + 1-deoxy-D-xylulose 5-phosphate = [ThiS sulfur-carrier protein]-C-terminal Gly-Gly + 2-[(2R,5Z)-2-carboxy-4-methylthiazol-5(2H)-ylidene]ethyl phosphate + 2 H2O + H(+). It participates in cofactor biosynthesis; thiamine diphosphate biosynthesis. Its function is as follows. Catalyzes the rearrangement of 1-deoxy-D-xylulose 5-phosphate (DXP) to produce the thiazole phosphate moiety of thiamine. Sulfur is provided by the thiocarboxylate moiety of the carrier protein ThiS. In vitro, sulfur can be provided by H(2)S. The sequence is that of Thiazole synthase from Coxiella burnetii (strain CbuK_Q154) (Coxiella burnetii (strain Q154)).